A 310-amino-acid chain; its full sequence is Ribosomal RNA small subunit methyltransferase H (310 aa).

S-adenosyl-L-methionine is bound by residues 33 to 35 (AGH), aspartate 53, tyrosine 83, aspartate 100, and glutamine 107.

This sequence belongs to the methyltransferase superfamily. RsmH family.

The protein resides in the cytoplasm. It catalyses the reaction cytidine(1402) in 16S rRNA + S-adenosyl-L-methionine = N(4)-methylcytidine(1402) in 16S rRNA + S-adenosyl-L-homocysteine + H(+). Its function is as follows. Specifically methylates the N4 position of cytidine in position 1402 (C1402) of 16S rRNA. This chain is Ribosomal RNA small subunit methyltransferase H, found in Clostridium perfringens (strain ATCC 13124 / DSM 756 / JCM 1290 / NCIMB 6125 / NCTC 8237 / Type A).